A 237-amino-acid polypeptide reads, in one-letter code: LexA repressor (237 aa).

The span at Met-1–Asn-12 shows a compositional bias: polar residues. The segment at Met-1–Arg-20 is disordered. The segment at residues Ile-41–Lys-61 is a DNA-binding region (H-T-H motif). The span at Gly-67–Asp-80 shows a compositional bias: basic and acidic residues. Residues Gly-67–Thr-112 are disordered. Active-site for autocatalytic cleavage activity residues include Ser-161 and Lys-198.

This sequence belongs to the peptidase S24 family. Homodimer.

It carries out the reaction Hydrolysis of Ala-|-Gly bond in repressor LexA.. In terms of biological role, represses a number of genes involved in the response to DNA damage (SOS response), including recA and lexA. In the presence of single-stranded DNA, RecA interacts with LexA causing an autocatalytic cleavage which disrupts the DNA-binding part of LexA, leading to derepression of the SOS regulon and eventually DNA repair. The chain is LexA repressor from Corynebacterium diphtheriae (strain ATCC 700971 / NCTC 13129 / Biotype gravis).